The sequence spans 863 residues: Dipeptidyl peptidase 9 (863 aa).

Positions 1-20 are disordered; it reads MATTGTPTADRGDAAATDDP. The residue at position 2 (A2) is an N-acetylalanine. Active-site charge relay system residues include S730, D808, and H840. Residue S730 participates in Val-boroPro binding.

The protein belongs to the peptidase S9B family. DPPIV subfamily. As to quaternary structure, homodimer. Forms a ternary complex with NLRP1, composed of a DPP9 homodimer, one full-length NLRP1 protein, and one cleaved C-terminus of NLRP1 (NACHT, LRR and PYD domains-containing protein 1, C-terminus). Forms a ternary complex with CARD8, composed of a DPP9 homodimer, one full-length NLRP1 protein, and one cleaved C-terminus of CARD8 (Caspase recruitment domain-containing protein 8, C-terminus). In the ternary complex, only one subunit of the DPP9 homodimer is bound to NLRP1 or CARD8. In terms of tissue distribution, ubiquitously expressed, with highest levels in liver, heart and muscle, and lowest levels in brain.

It localises to the cytoplasm. It is found in the cytosol. Its subcellular location is the nucleus. It catalyses the reaction Release of an N-terminal dipeptide, Xaa-Yaa-|-Zaa-, from a polypeptide, preferentially when Yaa is Pro, provided Zaa is neither Pro nor hydroxyproline.. With respect to regulation, inhibited by the serine proteinase inhibitor 4-(2-aminoethyl)benzenesulphonyl fluoride (AEBSF), and by di-isopropylfluorophosphate. Inhibited by Val-boroPro (Talabostat, PT-100), a non-selective inhibitor, which triggers pyroptosis in monocytes and macrophages. Val-boroPro inhibits activity by binding to the active site, mimicking a substrate-bound state, thereby displacing the C-terminal fragment of NLRP1, leading to activation of the NLRP1 inflammasome. In contrast, Val-boroPro does not directly displaces CARD8: it acts by promoting degradation of the N-terminal part of CARD8, leading to indirect disruption of the ternary complex. Chemical inhibition of DPP9 by Val-boroPro in HIV-1-infected cells activates the CARD8 inflammasome, triggering cell death, offering a promising strategy for the elimination of HIV-1 reservoirs in people living with HIV-1. Dipeptidyl peptidase that cleaves off N-terminal dipeptides from proteins having a Pro or Ala residue at position 2. Acts as a key inhibitor of caspase-1-dependent monocyte and macrophage pyroptosis in resting cells by preventing activation of NLRP1 and CARD8. Sequesters the cleaved C-terminal part of NLRP1 and CARD8, which respectively constitute the active part of the NLRP1 and CARD8 inflammasomes, in a ternary complex, thereby preventing their oligomerization and activation. The dipeptidyl peptidase activity is required to suppress NLRP1 and CARD8; however, neither NLRP1 nor CARD8 are bona fide substrates of DPP9, suggesting the existence of substrate(s) required for NLRP1 and CARD8 inhibition. The protein is Dipeptidyl peptidase 9 of Homo sapiens (Human).